The sequence spans 558 residues: Dihydroxy-acid dehydratase (558 aa).

Cys51 provides a ligand contact to [2Fe-2S] cluster. A Mg(2+)-binding site is contributed by Asp83. A [2Fe-2S] cluster-binding site is contributed by Cys124. Asp125 and Lys126 together coordinate Mg(2+). Residue Lys126 is modified to N6-carboxylysine. Cys196 contacts [2Fe-2S] cluster. Glu447 serves as a coordination point for Mg(2+). Residue Ser473 is the Proton acceptor of the active site.

Belongs to the IlvD/Edd family. In terms of assembly, homodimer. Requires [2Fe-2S] cluster as cofactor. The cofactor is Mg(2+).

It carries out the reaction (2R)-2,3-dihydroxy-3-methylbutanoate = 3-methyl-2-oxobutanoate + H2O. It catalyses the reaction (2R,3R)-2,3-dihydroxy-3-methylpentanoate = (S)-3-methyl-2-oxopentanoate + H2O. It participates in amino-acid biosynthesis; L-isoleucine biosynthesis; L-isoleucine from 2-oxobutanoate: step 3/4. It functions in the pathway amino-acid biosynthesis; L-valine biosynthesis; L-valine from pyruvate: step 3/4. In terms of biological role, functions in the biosynthesis of branched-chain amino acids. Catalyzes the dehydration of (2R,3R)-2,3-dihydroxy-3-methylpentanoate (2,3-dihydroxy-3-methylvalerate) into 2-oxo-3-methylpentanoate (2-oxo-3-methylvalerate) and of (2R)-2,3-dihydroxy-3-methylbutanoate (2,3-dihydroxyisovalerate) into 2-oxo-3-methylbutanoate (2-oxoisovalerate), the penultimate precursor to L-isoleucine and L-valine, respectively. This Flavobacterium psychrophilum (strain ATCC 49511 / DSM 21280 / CIP 103535 / JIP02/86) protein is Dihydroxy-acid dehydratase.